We begin with the raw amino-acid sequence, 165 residues long: Zinc finger C2H2 protein ECU11_0990 (165 aa).

2 stretches are compositionally biased toward basic and acidic residues: residues 1–10 and 19–32; these read MEAESPKERV and DPER…DTSS. A disordered region spans residues 1 to 38; it reads MEAESPKERVQGVSGESWDPERGVKEREDTSSKKGKGV. 2 consecutive C2H2-type zinc fingers follow at residues 103-125 and 136-158; these read FGCE…KAQH and LFCP…SRYH.

The polypeptide is Zinc finger C2H2 protein ECU11_0990 (Encephalitozoon cuniculi (strain GB-M1) (Microsporidian parasite)).